A 402-amino-acid chain; its full sequence is 4-hydroxy-3-methylbut-2-enyl diphosphate reductase (402 aa).

Cys-66 is a [4Fe-4S] cluster binding site. His-96 contacts (2E)-4-hydroxy-3-methylbut-2-enyl diphosphate. His-96 contributes to the dimethylallyl diphosphate binding site. His-96 is an isopentenyl diphosphate binding site. Position 157 (Cys-157) interacts with [4Fe-4S] cluster. (2E)-4-hydroxy-3-methylbut-2-enyl diphosphate is bound at residue His-185. A dimethylallyl diphosphate-binding site is contributed by His-185. His-185 is a binding site for isopentenyl diphosphate. The Proton donor role is filled by Glu-187. Thr-250 is a binding site for (2E)-4-hydroxy-3-methylbut-2-enyl diphosphate. Residue Cys-288 coordinates [4Fe-4S] cluster. Residues Ser-317, Ser-318, Asn-319, and Ser-379 each coordinate (2E)-4-hydroxy-3-methylbut-2-enyl diphosphate. 4 residues coordinate dimethylallyl diphosphate: Ser-317, Ser-318, Asn-319, and Ser-379. Residues Ser-317, Ser-318, Asn-319, and Ser-379 each contribute to the isopentenyl diphosphate site.

It belongs to the IspH family. The cofactor is [4Fe-4S] cluster.

The enzyme catalyses isopentenyl diphosphate + 2 oxidized [2Fe-2S]-[ferredoxin] + H2O = (2E)-4-hydroxy-3-methylbut-2-enyl diphosphate + 2 reduced [2Fe-2S]-[ferredoxin] + 2 H(+). The catalysed reaction is dimethylallyl diphosphate + 2 oxidized [2Fe-2S]-[ferredoxin] + H2O = (2E)-4-hydroxy-3-methylbut-2-enyl diphosphate + 2 reduced [2Fe-2S]-[ferredoxin] + 2 H(+). The protein operates within isoprenoid biosynthesis; dimethylallyl diphosphate biosynthesis; dimethylallyl diphosphate from (2E)-4-hydroxy-3-methylbutenyl diphosphate: step 1/1. It functions in the pathway isoprenoid biosynthesis; isopentenyl diphosphate biosynthesis via DXP pathway; isopentenyl diphosphate from 1-deoxy-D-xylulose 5-phosphate: step 6/6. Catalyzes the conversion of 1-hydroxy-2-methyl-2-(E)-butenyl 4-diphosphate (HMBPP) into a mixture of isopentenyl diphosphate (IPP) and dimethylallyl diphosphate (DMAPP). Acts in the terminal step of the DOXP/MEP pathway for isoprenoid precursor biosynthesis. The sequence is that of 4-hydroxy-3-methylbut-2-enyl diphosphate reductase from Gloeothece citriformis (strain PCC 7424) (Cyanothece sp. (strain PCC 7424)).